Here is a 341-residue protein sequence, read N- to C-terminus: General L-amino acid-binding periplasmic protein AapJ (341 aa).

Residues 1 to 23 form the signal peptide; the sequence is MKNKLLSAAIGAAVLAVGASAAS.

Belongs to the bacterial solute-binding protein 3 family. The complex is composed of two ATP-binding proteins (AapP), two transmembrane proteins (AapM and AapQ) and a solute-binding protein (AapJ).

It is found in the periplasm. Part of the ABC transporter complex AapJQMP involved in uptake of L-amino acids. Affects the efflux of these amino acids as well. Essential for the development of bacteroids, the differentiated legume-symbiotic forms of this bacterium, and for the effective N(2) fixation by them. The polypeptide is General L-amino acid-binding periplasmic protein AapJ (aapJ) (Rhizobium johnstonii (strain DSM 114642 / LMG 32736 / 3841) (Rhizobium leguminosarum bv. viciae)).